A 273-amino-acid polypeptide reads, in one-letter code: Putative pyruvate, phosphate dikinase regulatory protein (273 aa).

149–156 is an ADP binding site; that stretch reads GPSRTSKT.

Belongs to the pyruvate, phosphate/water dikinase regulatory protein family. PDRP subfamily.

It catalyses the reaction N(tele)-phospho-L-histidyl/L-threonyl-[pyruvate, phosphate dikinase] + ADP = N(tele)-phospho-L-histidyl/O-phospho-L-threonyl-[pyruvate, phosphate dikinase] + AMP + H(+). It carries out the reaction N(tele)-phospho-L-histidyl/O-phospho-L-threonyl-[pyruvate, phosphate dikinase] + phosphate + H(+) = N(tele)-phospho-L-histidyl/L-threonyl-[pyruvate, phosphate dikinase] + diphosphate. Its function is as follows. Bifunctional serine/threonine kinase and phosphorylase involved in the regulation of the pyruvate, phosphate dikinase (PPDK) by catalyzing its phosphorylation/dephosphorylation. The polypeptide is Putative pyruvate, phosphate dikinase regulatory protein (Rickettsia canadensis (strain McKiel)).